A 640-amino-acid polypeptide reads, in one-letter code: MSNITILDEATANKIAAGEVVERPVSVVKELVENSLDAGANRISVELTQGGITGIKVVDNGYGMPAEDVQLCFLRHATSKIKRAEDLNSILTLGFRGEALPSIAAVSKVTLTTRTEDELAGTTMQIEGGYMQNVVPTGCPVGTIIEIKDLFFNTPARRKFLKTANAETSQVSDLITRLAMARPDVRFELRSGNRVLFSSPGTGSLKDTAAVIFGLDNVRSMLEIGYQGKLLSVAGLISKPVLTRASRHYQNFFINGRYIRSGFLSSILQQAYDTLIPAGRFPIAILHIDIDPTQVDVNVHPTKMEIRMAREGEIQEELLAALSDSLNVPTAITGLWEIMPGRTKNTATDQRAENLEVKPDSKEKELQPKESQHPRLVACDLPSGKIMPPRHDQEQLHFSSRRIAPVRGKNSLLPDEGSSINREEIPPVVDVKEQQLKENPNTYQPAETLGFPVLVPAGQVPPTYVLAHGEGGLYIIDQHAAHERVLYEKYLYLLGNYVEAQMLLEPLTLEIPHHEAQLIIKHIVDFNELGFILEHFGGDTFLLRGVPTNAITEPKEVFLDLLARLQENPSQKVEKNLVLDHLAAAMACRDAVKSGQHFSAVETKALLDGLARCQKPYTCPHGRPTLIQISQEELKKRFKR.

Positions Thr-343–Pro-389 are disordered. A compositionally biased stretch (basic and acidic residues) spans Gln-350 to His-373.

It belongs to the DNA mismatch repair MutL/HexB family.

Functionally, this protein is involved in the repair of mismatches in DNA. It is required for dam-dependent methyl-directed DNA mismatch repair. May act as a 'molecular matchmaker', a protein that promotes the formation of a stable complex between two or more DNA-binding proteins in an ATP-dependent manner without itself being part of a final effector complex. This chain is DNA mismatch repair protein MutL, found in Desulforamulus reducens (strain ATCC BAA-1160 / DSM 100696 / MI-1) (Desulfotomaculum reducens).